The following is a 438-amino-acid chain: UDP-N-acetylglucosamine 1-carboxyvinyltransferase (438 aa).

Position 35-36 (35-36 (KN)) interacts with phosphoenolpyruvate. R105 serves as a coordination point for UDP-N-acetyl-alpha-D-glucosamine. C129 acts as the Proton donor in catalysis. C129 bears the 2-(S-cysteinyl)pyruvic acid O-phosphothioketal mark. Residues 134 to 138 (RPVDL), D321, and V343 each bind UDP-N-acetyl-alpha-D-glucosamine.

The protein belongs to the EPSP synthase family. MurA subfamily.

Its subcellular location is the cytoplasm. It catalyses the reaction phosphoenolpyruvate + UDP-N-acetyl-alpha-D-glucosamine = UDP-N-acetyl-3-O-(1-carboxyvinyl)-alpha-D-glucosamine + phosphate. It participates in cell wall biogenesis; peptidoglycan biosynthesis. In terms of biological role, cell wall formation. Adds enolpyruvyl to UDP-N-acetylglucosamine. In Synechocystis sp. (strain ATCC 27184 / PCC 6803 / Kazusa), this protein is UDP-N-acetylglucosamine 1-carboxyvinyltransferase.